Here is a 117-residue protein sequence, read N- to C-terminus: Large ribosomal subunit protein bL20 (117 aa).

The protein belongs to the bacterial ribosomal protein bL20 family.

Its function is as follows. Binds directly to 23S ribosomal RNA and is necessary for the in vitro assembly process of the 50S ribosomal subunit. It is not involved in the protein synthesizing functions of that subunit. This Geotalea daltonii (strain DSM 22248 / JCM 15807 / FRC-32) (Geobacter daltonii) protein is Large ribosomal subunit protein bL20.